Here is a 597-residue protein sequence, read N- to C-terminus: MFPVAPKPQDSSQASDRLMTEKQQEEAEWESINVLLMMHGLKPLSLVKRTDLKDLIIFDKQSSQRMRQNLKLLVEETSRQQNMIQELIETNQQLRNELQLEQSRAANQEQRANDLEQIMESVKSKIGELEDESLNRACQQQNKIKDLQKEQKTLQVKCQHYKKKRTEQQETIASLQMEVCRLRKEEEDRIVTQNRVFAYLCKRVPHTVLDRQLLCLIDYYESKIRKIHTQRQYKEDESQSEEENDYRNLDASPTYKGLLMSLQNQLKESKSKIDALLSEKLNLQKDLETRPTQHELRLYKQQVKKLEKALKKNIKLQELISHKKAEDTEKKDEPSKYNQQQALIDQRYFQVLCSINSIIHNPRAPVIIYKQSKGGAQNFNKDLVQDCGFEHLVPVIEMWADQLTSLKDLYKSLKTLSAELVPWHNLKKQDENEGIKVEDLLFIVDTMLEEVENKEKDSNMPNFQTLQAIVSHFQKLFDVPSLNGVYPRMNEVYTRLGEMNNAVRNLQELLELDSSSSLCVLVSTVGKLCRLINEDVNEQVMQVLGPEDLQSIIYKLEEHEEFFPAFQAFTNDLLEILEIDDLDAIVPAVKKLKVLSY.

The interval 1–23 (MFPVAPKPQDSSQASDRLMTEKQ) is disordered. Coiled-coil stretches lie at residues 66-179 (MRQN…QMEV) and 254-326 (TYKG…KKAE). A TPR repeat occupies 483-516 (NGVYPRMNEVYTRLGEMNNAVRNLQELLELDSSS).

In terms of assembly, directly interacts with tubulin-gamma; this interaction determines centrosomal localization.

It is found in the cytoplasm. Its subcellular location is the cytoskeleton. It localises to the microtubule organizing center. The protein resides in the centrosome. Its function is as follows. Plays a role in the organization of both preexisting and nascent microtubules in interphase cells. During mitosis, required for the organization and orientation of the mitotic spindle. The polypeptide is Centrosomal protein of 70 kDa (CEP70) (Pongo abelii (Sumatran orangutan)).